Reading from the N-terminus, the 254-residue chain is 3-deoxy-manno-octulosonate cytidylyltransferase (254 aa).

It belongs to the KdsB family.

It is found in the cytoplasm. The enzyme catalyses 3-deoxy-alpha-D-manno-oct-2-ulosonate + CTP = CMP-3-deoxy-beta-D-manno-octulosonate + diphosphate. It participates in nucleotide-sugar biosynthesis; CMP-3-deoxy-D-manno-octulosonate biosynthesis; CMP-3-deoxy-D-manno-octulosonate from 3-deoxy-D-manno-octulosonate and CTP: step 1/1. The protein operates within bacterial outer membrane biogenesis; lipopolysaccharide biosynthesis. In terms of biological role, activates KDO (a required 8-carbon sugar) for incorporation into bacterial lipopolysaccharide in Gram-negative bacteria. The sequence is that of 3-deoxy-manno-octulosonate cytidylyltransferase from Haemophilus influenzae (strain PittEE).